The sequence spans 210 residues: Na(+)-translocating NADH-quinone reductase subunit D (210 aa).

A run of 6 helical transmembrane segments spans residues 14-34 (PIIN…ALAV), 42-62 (LVMS…ISLI), 72-92 (IIVQ…VLQA), 96-116 (EIAK…IVMG), 131-151 (FMDG…VGFF), and 178-198 (NGLL…IWVI).

The protein belongs to the NqrDE/RnfAE family. In terms of assembly, composed of six subunits; NqrA, NqrB, NqrC, NqrD, NqrE and NqrF.

Its subcellular location is the cell inner membrane. The enzyme catalyses a ubiquinone + n Na(+)(in) + NADH + H(+) = a ubiquinol + n Na(+)(out) + NAD(+). In terms of biological role, NQR complex catalyzes the reduction of ubiquinone-1 to ubiquinol by two successive reactions, coupled with the transport of Na(+) ions from the cytoplasm to the periplasm. NqrA to NqrE are probably involved in the second step, the conversion of ubisemiquinone to ubiquinol. This is Na(+)-translocating NADH-quinone reductase subunit D from Shewanella denitrificans (strain OS217 / ATCC BAA-1090 / DSM 15013).